An 83-amino-acid polypeptide reads, in one-letter code: UPF0147 protein TK2131 (83 aa).

This sequence belongs to the UPF0147 family.

This is UPF0147 protein TK2131 from Thermococcus kodakarensis (strain ATCC BAA-918 / JCM 12380 / KOD1) (Pyrococcus kodakaraensis (strain KOD1)).